The primary structure comprises 901 residues: Probable inorganic carbon transporter subunit DabA (901 aa).

Zn(2+)-binding residues include C424, D426, H606, and C621.

It belongs to the inorganic carbon transporter (TC 9.A.2) DabA family. In terms of assembly, forms a complex with DabB. Requires Zn(2+) as cofactor.

Its subcellular location is the cell membrane. Its function is as follows. Part of an energy-coupled inorganic carbon pump. The chain is Probable inorganic carbon transporter subunit DabA from Staphylococcus aureus (strain MSSA476).